The chain runs to 447 residues: MAGAGGGNDIQWCFSQVKGAVDDDVAEADIISTVEFNHSGELLATGDKGGRVVIFQQEQENKIQSHSRGEYNVYSTFQSHEPEFDYLKSLEIEEKINKIRWLPQKNAAQFLLSTNDKTIKLWKISERDKRPEGYNLKEEDGRYRDPTTVTTLRVPVFRPMDLMVEASPRRIFANAHTYHINSISINSDYETYLSADDLRINLWHLEITDRSFNIVDIKPANMEELTEVITAAEFHPNSCNTFVYSSSKGTIRLCDMRASALCDRHSKLFEEPEDPSNRSFFSEIISSISDVKFSHSGRYMMTRDYLSVKVWDLNMENRPVETYQVHEYLRSKLCSLYENDCIFDKFECCWNGSDSVVMTGSYNNFFRMFDRNTKRDITLEASRENNKPRTVLKPRKVCASGKRKKDEISVDSLDFNKKILHTAWHPKENIIAVATTNNLYIFQDKVN.

An N-acetylalanine modification is found at alanine 2. 7 WD repeats span residues 11–80 (QWCF…FQSH), 94–174 (EKIN…IFAN), 175–218 (AHTY…VDIK), 227–270 (EVIT…KLFE), 288–325 (ISDV…TYQV), 347–381 (ECCW…TLEA), and 414–446 (DFNK…QDKV).

It belongs to the phosphatase 2A regulatory subunit B family. PP2A consists of a common heterodimeric core enzyme, composed of a 36 kDa catalytic subunit (subunit C) and a 65 kDa constant regulatory subunit (PR65 or subunit A), that associates with a variety of regulatory subunits. Proteins that associate with the core dimer include three families of regulatory subunits B (the R2/B/PR55/B55, R3/B''/PR72/PR130/PR59 and R5/B'/B56 families), the 48 kDa variable regulatory subunit, viral proteins, and cell signaling molecules. Interacts with the PP2A C catalytic subunit PPP2CA. Interacts with the PP2A A subunit PPP2R1A. Found in a complex with at least ARL2, PPP2CB, PPP2R1A, PPP2R2A, PPP2R5E and TBCD. Interacts with MFHAS1; the interaction is direct. Interacts with PABIR1/FAM122A (via its N-terminus); the interaction is direct and inhibits PP2A activity. Interacts with ARPP19; the interaction is direct and inhibits PP2A activity. Interacts with CRTC3. In terms of tissue distribution, brain.

Substrate-recognition subunit of protein phosphatase 2A (PP2A) that plays a key role in cell cycle by controlling mitosis entry and exit. Involved in chromosome clustering during late mitosis by mediating dephosphorylation of MKI67. Essential for serine/threonine-protein phosphatase 2A-mediated dephosphorylation of WEE1, preventing its ubiquitin-mediated proteolysis, increasing WEE1 protein levels, and promoting the G2/M checkpoint. The chain is Serine/threonine-protein phosphatase 2A 55 kDa regulatory subunit B alpha isoform (Ppp2r2a) from Rattus norvegicus (Rat).